Here is a 282-residue protein sequence, read N- to C-terminus: ATP phosphoribosyltransferase (282 aa).

The protein belongs to the ATP phosphoribosyltransferase family. Long subfamily. Mg(2+) is required as a cofactor.

The protein resides in the cytoplasm. It carries out the reaction 1-(5-phospho-beta-D-ribosyl)-ATP + diphosphate = 5-phospho-alpha-D-ribose 1-diphosphate + ATP. Its pathway is amino-acid biosynthesis; L-histidine biosynthesis; L-histidine from 5-phospho-alpha-D-ribose 1-diphosphate: step 1/9. Feedback inhibited by histidine. In terms of biological role, catalyzes the condensation of ATP and 5-phosphoribose 1-diphosphate to form N'-(5'-phosphoribosyl)-ATP (PR-ATP). Has a crucial role in the pathway because the rate of histidine biosynthesis seems to be controlled primarily by regulation of HisG enzymatic activity. This Pyrobaculum islandicum (strain DSM 4184 / JCM 9189 / GEO3) protein is ATP phosphoribosyltransferase.